A 495-amino-acid chain; its full sequence is Acetyl-coenzyme A carboxylase carboxyl transferase subunit beta, chloroplastic (495 aa).

The interval 188 to 208 is disordered; the sequence is SRNSSENEGSSRRTRTKGSDL. The region spanning 226 to 495 is the CoA carboxyltransferase N-terminal domain; that stretch reads LWVQCENCYG…PLNQKSSKIK (270 aa). Zn(2+) contacts are provided by cysteine 230, cysteine 233, cysteine 249, and cysteine 252. The segment at 230 to 252 adopts a C4-type zinc-finger fold; that stretch reads CENCYGLNYKKFFKSKMNICEQC.

The protein belongs to the AccD/PCCB family. Acetyl-CoA carboxylase is a heterohexamer composed of biotin carboxyl carrier protein, biotin carboxylase and 2 subunits each of ACCase subunit alpha and ACCase plastid-coded subunit beta (accD). Zn(2+) serves as cofactor.

It is found in the plastid. Its subcellular location is the chloroplast stroma. The catalysed reaction is N(6)-carboxybiotinyl-L-lysyl-[protein] + acetyl-CoA = N(6)-biotinyl-L-lysyl-[protein] + malonyl-CoA. It functions in the pathway lipid metabolism; malonyl-CoA biosynthesis; malonyl-CoA from acetyl-CoA: step 1/1. Functionally, component of the acetyl coenzyme A carboxylase (ACC) complex. Biotin carboxylase (BC) catalyzes the carboxylation of biotin on its carrier protein (BCCP) and then the CO(2) group is transferred by the transcarboxylase to acetyl-CoA to form malonyl-CoA. The polypeptide is Acetyl-coenzyme A carboxylase carboxyl transferase subunit beta, chloroplastic (Nicotiana tomentosiformis (Tobacco)).